The primary structure comprises 296 residues: Trimeric intracellular cation channel type A (296 aa).

The Lumenal portion of the chain corresponds to 1-19; sequence MELPGALQLGELAAAFASV. A helical membrane pass occupies residues 20–37; that stretch reads PVFPLFDAAYFIVSVLYL. Topologically, residues 38–51 are cytoplasmic; that stretch reads KYEPGAVEMSRKSP. Residues 52–73 form a helical membrane-spanning segment; that stretch reads FASWLCAMLHCFGSYILADLLL. Residue Gly-74 coordinates Ca(2+). The Lumenal portion of the chain corresponds to 74 to 85; sequence GESPIHYFSNNS. A helical membrane pass occupies residues 86–103; sequence SVILATAVWYLIFFCPMN. Over 104-107 the chain is Cytoplasmic; that stretch reads LFYK. Residues 108–126 form a helical membrane-spanning segment; it reads CVSFLPVKLIFVAMKEVVR. The a 1,2-diacyl-sn-glycero-3-phospho-(1D-myo-inositol-4,5-bisphosphate) site is built by Lys-122 and Arg-126. At 127–144 the chain is on the lumenal side; that stretch reads VRKIAAGVHHAHHQYHHG. A helical transmembrane segment spans residues 145–162; the sequence is WFIMMATGWVKGSGVALM. At 163 to 183 the chain is on the cytoplasmic side; it reads SNFEQLLRGVWRPETNEILHM. The helical transmembrane segment at 184 to 201 threads the bilayer; sequence SFPTKASLYGTVLFTLQQ. The Lumenal segment spans residues 202 to 209; it reads THWLPVSE. A helical transmembrane segment spans residues 210 to 230; the sequence is ANLVFFFTMFMIVCKVFMTAT. Residues 231 to 273 are Cytoplasmic-facing; the sequence is HSHASPFAPVEGFICPVFFGSVSSGHTSHHNQHGHSHEASYQP. The segment at 256-296 is disordered; it reads HTSHHNQHGHSHEASYQPPPPVKSKEELNEGTRKRKAKKAE. Positions 278–287 are enriched in basic and acidic residues; sequence KSKEELNEGT.

Belongs to the TMEM38 family. As to quaternary structure, homotrimer; conformation seems to be controled by binding to diacylglycerol (DAG).

It localises to the sarcoplasmic reticulum membrane. The protein resides in the nucleus membrane. It carries out the reaction K(+)(in) = K(+)(out). With respect to regulation, channel activity is activated by a change of voltage within the sarcoplasmic reticulum lumen and blocked by luminal high Ca(2+) levels. Intracellular monovalent cation channel required for maintenance of rapid intracellular calcium release. Acts as a potassium counter-ion channel that functions in synchronization with calcium release from intracellular stores. Opened by a change of voltage within the sarcoplasmic reticulum lumen. This chain is Trimeric intracellular cation channel type A (TMEM38A), found in Gallus gallus (Chicken).